Here is a 259-residue protein sequence, read N- to C-terminus: MTDLKASSLRALKLMDLTTLNDDDTNEKVIALCHQAKTPVGNTAAICIYPRFIPIARKTLKEQGTPDIRIATVTNFPHGNDDIDIALAETRAAIAYGADEVDVVFPYRALIAGNEQVGFDLVKACKDACAAANVLLKVIIETGELKEEALIRKASEISIKAGADFIKTSTGKVPVNATPESARIMMEVIRDMGVSKTVGFKPAGGVRTAEDAQKFLAIADELFGANWADSRHYRFGASSLLASLLKALGHGDGKSASSY.

The active-site Proton donor/acceptor is D102. The active-site Schiff-base intermediate with acetaldehyde is K167. K201 functions as the Proton donor/acceptor in the catalytic mechanism.

It belongs to the DeoC/FbaB aldolase family. DeoC type 2 subfamily.

The protein localises to the cytoplasm. The catalysed reaction is 2-deoxy-D-ribose 5-phosphate = D-glyceraldehyde 3-phosphate + acetaldehyde. It participates in carbohydrate degradation; 2-deoxy-D-ribose 1-phosphate degradation; D-glyceraldehyde 3-phosphate and acetaldehyde from 2-deoxy-alpha-D-ribose 1-phosphate: step 2/2. Functionally, catalyzes a reversible aldol reaction between acetaldehyde and D-glyceraldehyde 3-phosphate to generate 2-deoxy-D-ribose 5-phosphate. The polypeptide is Deoxyribose-phosphate aldolase (Salmonella typhi).